A 61-amino-acid polypeptide reads, in one-letter code: Sperm protamine P1 (61 aa).

The interval 1–61 (MARFRRSRSR…RSSRRSRRRN (61 aa)) is disordered.

It belongs to the protamine P1 family. As to expression, testis.

Its subcellular location is the nucleus. The protein resides in the chromosome. Functionally, protamines substitute for histones in the chromatin of sperm during the haploid phase of spermatogenesis. They compact sperm DNA into a highly condensed, stable and inactive complex. This is Sperm protamine P1 (PRM1) from Ornithorhynchus anatinus (Duckbill platypus).